We begin with the raw amino-acid sequence, 514 residues long: Probable drug/proton antiporter YHK8 (514 aa).

Residues 1-74 (MVAEFQIASA…RHMSTARRYY (74 aa)) are Cytoplasmic-facing. A helical membrane pass occupies residues 75–95 (ISSLITFTSMVITMISSSWTL). Topologically, residues 96–111 (PSTHIIEHFHISHEVS) are extracellular. Residues 112 to 132 (TLGITLYVFGLGIGPLFLSPL) traverse the membrane as a helical segment. The Cytoplasmic portion of the chain corresponds to 133 to 141 (SELYGRRIT). The chain crosses the membrane as a helical span at residues 142–162 (FLYALTLSIIWQCLTIWSKTI). At 163-170 (TGVMFGRF) the chain is on the extracellular side. A helical transmembrane segment spans residues 171–191 (LSGFFGSAFLSVAGGAIADIF). Residues 192-200 (DKDQIGIPM) are Cytoplasmic-facing. The chain crosses the membrane as a helical span at residues 201–221 (AIYTTSAFLGPSLGPIIGGAL). Residues 222-227 (YHQSYK) lie on the Extracellular side of the membrane. A helical transmembrane segment spans residues 228–248 (WTFITLLITSGCCLVMIIFTI). Topologically, residues 249 to 307 (PETYKPMLLIRKAKRLRKEKNDQRYYAVLEVTREQTSLLSAIFLSTKRPFGLLLRDRMM) are cytoplasmic. A helical membrane pass occupies residues 308 to 328 (GVLCFYTGLELAIIYLYFVAF). The Extracellular segment spans residues 329 to 342 (PYVFKKLYNFGPME). A helical transmembrane segment spans residues 343 to 363 (IACSYIGIMVGMILSAPTCLL). The Cytoplasmic portion of the chain corresponds to 364-386 (FQKTFEWRVKRNNGVKTPEMRFE). Residues 387–407 (PLFYGAFLTPVGLFIFAFTCY) form a helical membrane-spanning segment. At 408-412 (KHVHW) the chain is on the extracellular side. The helical transmembrane segment at 413–433 (IAPIIGSAIFGSGVYFVFTGV) threads the bilayer. Residues 434-447 (FAYTVDAYRRYAAS) lie on the Cytoplasmic side of the membrane. The chain crosses the membrane as a helical span at residues 448 to 468 (GMACNTFVRCIMAGVFPLFGL). The Extracellular portion of the chain corresponds to 469-477 (QMYKSMGVN). A helical membrane pass occupies residues 478–498 (WAGFLLAMVTVAMIPVPFLFT). Residues 499–514 (KYGARLRAKSPYAWDD) lie on the Cytoplasmic side of the membrane.

It belongs to the major facilitator superfamily. CAR1 family.

It localises to the membrane. Functionally, probable drug/proton antiporter. This Saccharomyces cerevisiae (strain ATCC 204508 / S288c) (Baker's yeast) protein is Probable drug/proton antiporter YHK8 (YHK8).